A 152-amino-acid chain; its full sequence is Transcription factor ATOH7 (152 aa).

Residues 40-92 (RRRLAANARERRRMQGLNTAFDRLRRVVPQWGQDKKLSKYETLQMALSYIMAL) form the bHLH domain.

As to quaternary structure, forms a heterodimer with TCF3 isoform E47; interaction may be required for DNA-binding in certain situations.

It is found in the nucleus. The protein resides in the perikaryon. It localises to the cell projection. The protein localises to the axon. In terms of biological role, transcription factor that binds to DNA at the consensus sequence 5'-CAG[GC]TG-3'. Dimerization with TCF3 isoform E47 may be required in certain situations. Binds to gene promoters and enhancer elements, and thereby regulates a transcriptional program of retinal ganglion cell (RGC) determinant genes. Although the exact mechanism is not certain, retinal transcription regulation by ATOH7 has a role in RGC determination and survival, photoreceptor population development, targeting of RGC axons to the optic nerve and development of the retino-hypothalamic tract. Binds to its own promoter and enhancer sequences, suggesting autoregulation of ATOH7 transcription. Required for retinal circadian rhythm photoentrainment. Plays a role in brainstem auditory signaling and binaural processing. The protein is Transcription factor ATOH7 of Homo sapiens (Human).